We begin with the raw amino-acid sequence, 536 residues long: Light-independent protochlorophyllide reductase subunit B (536 aa).

Residue D36 participates in [4Fe-4S] cluster binding. Residue D292 is the Proton donor of the active site. Substrate is bound at residue 427–428 (GL). Residues 448–469 (SHLGHLGGHQSQTEQQQSQAAT) show a composition bias toward low complexity. The disordered stretch occupies residues 448–489 (SHLGHLGGHQSQTEQQQSQAATNPSTQSNADSSSEESPLWTP). A compositionally biased stretch (polar residues) spans 470-483 (NPSTQSNADSSSEE).

This sequence belongs to the ChlB/BchB/BchZ family. As to quaternary structure, protochlorophyllide reductase is composed of three subunits; ChlL, ChlN and ChlB. Forms a heterotetramer of two ChlB and two ChlN subunits. The cofactor is [4Fe-4S] cluster.

It carries out the reaction chlorophyllide a + oxidized 2[4Fe-4S]-[ferredoxin] + 2 ADP + 2 phosphate = protochlorophyllide a + reduced 2[4Fe-4S]-[ferredoxin] + 2 ATP + 2 H2O. It participates in porphyrin-containing compound metabolism; chlorophyll biosynthesis (light-independent). Functionally, component of the dark-operative protochlorophyllide reductase (DPOR) that uses Mg-ATP and reduced ferredoxin to reduce ring D of protochlorophyllide (Pchlide) to form chlorophyllide a (Chlide). This reaction is light-independent. The NB-protein (ChlN-ChlB) is the catalytic component of the complex. The polypeptide is Light-independent protochlorophyllide reductase subunit B (Prochlorococcus marinus (strain MIT 9313)).